Reading from the N-terminus, the 351-residue chain is D-alanine--D-alanine ligase (351 aa).

The region spanning 135–343 is the ATP-grasp domain; the sequence is NQIFLQSGQK…MEEVFADLIE (209 aa). 167-222 lines the ATP pocket; that stretch reads LMSLGFPQFLKPVEGGSSVSTYKITNQEQLSRQLALIFESDSKVMSQSFLAGTEVS. 3 residues coordinate Mg(2+): aspartate 298, glutamate 310, and asparagine 312.

This sequence belongs to the D-alanine--D-alanine ligase family. It depends on Mg(2+) as a cofactor. Mn(2+) serves as cofactor.

The protein localises to the cytoplasm. The enzyme catalyses 2 D-alanine + ATP = D-alanyl-D-alanine + ADP + phosphate + H(+). The protein operates within cell wall biogenesis; peptidoglycan biosynthesis. Cell wall formation. This is D-alanine--D-alanine ligase from Leptospira borgpetersenii serovar Hardjo-bovis (strain JB197).